Reading from the N-terminus, the 95-residue chain is Integration host factor subunit beta (95 aa).

It belongs to the bacterial histone-like protein family. Heterodimer of an alpha and a beta chain.

Functionally, this protein is one of the two subunits of integration host factor, a specific DNA-binding protein that functions in genetic recombination as well as in transcriptional and translational control. The polypeptide is Integration host factor subunit beta (Shewanella loihica (strain ATCC BAA-1088 / PV-4)).